The chain runs to 693 residues: eEF1A lysine and N-terminal methyltransferase (693 aa).

It belongs to the methyltransferase superfamily.

The enzyme catalyses L-lysyl-[protein] + S-adenosyl-L-methionine = N(6)-methyl-L-lysyl-[protein] + S-adenosyl-L-homocysteine + H(+). The catalysed reaction is N(6)-methyl-L-lysyl-[protein] + S-adenosyl-L-methionine = N(6),N(6)-dimethyl-L-lysyl-[protein] + S-adenosyl-L-homocysteine + H(+). It carries out the reaction N-terminal glycyl-L-lysyl-L-glutamyl-[protein] + 3 S-adenosyl-L-methionine = N-terminal N,N,N-trimethyl-glycyl-L-lysyl-L-glutamyl-[protein] + 3 S-adenosyl-L-homocysteine + 3 H(+). Its function is as follows. Dual methyltransferase that catalyzes methylation of elongation factor 1-alpha (eef1a1 and eef1a2) at two different positions, and is therefore involved in the regulation of mRNA translation. Via its C-terminus, methylates the N-terminus of eef1a1 and eef1a2. Via its N-terminus dimethylates lysine residues of eef1a1 and eef1a2. The sequence is that of eEF1A lysine and N-terminal methyltransferase (mettl13) from Xenopus laevis (African clawed frog).